A 400-amino-acid chain; its full sequence is Cytohesin-2 (400 aa).

Residues 10-63 are a coiled coil; that stretch reads DLTPEERMELENIRRRKQELLVEIQRLREELSEAMSEVEGLEANEGSKTLQRNR. The region spanning 72 to 201 is the SEC7 domain; that stretch reads FNMDPKKGIQ…VIMLNTSLHN (130 aa). The region spanning 259-376 is the PH domain; it reads NPDREGWLLK…WIKSIQAAVS (118 aa). A 1,2-diacyl-sn-glycero-3-phospho-(1D-myo-inositol-3,4,5-trisphosphate)-binding positions include 268-276, Arg280, Tyr291, Arg301, Lys339, Asn350, and His351; that span reads KLGGGRVKT. The C-terminal autoinhibitory region stretch occupies residues 387-395; sequence RKKRISVKK.

Heteromer. Composed of TAMALIN, CYTH2 and at least one GRM1. Interacts with ARRB1. Interacts with ARL4D; the interaction is direct. Directly interacts with CCDC120 through the coiled coil domain; this interaction stabilizes CCDC120, possibly by preventing its ubiquitination, and is required for neurite growth in neuroblastoma cells. Interacts with ARF1. Interacts with FRMD4A. Interacts (via N-terminal domain) with INAVA (via N-terminal domain). Widely expressed.

It localises to the cell membrane. The protein localises to the cytoplasm. The protein resides in the cell projection. Its subcellular location is the growth cone. It is found in the cell junction. It localises to the tight junction. The protein localises to the adherens junction. In terms of biological role, acts as a guanine-nucleotide exchange factor (GEF). Promotes guanine-nucleotide exchange on ARF1, ARF3 and ARF6. Activates ARF factors through replacement of GDP with GTP. The cell membrane form, in association with ARL4 proteins, recruits ARF6 to the plasma membrane. Involved in neurite growth. This chain is Cytohesin-2, found in Homo sapiens (Human).